Reading from the N-terminus, the 309-residue chain is Prepilin leader peptidase/N-methyltransferase (309 aa).

Residues 35–55 (MQLAFAIVLGLVVGSFLNVVV) form a helical membrane-spanning segment. Zn(2+)-binding residues include cysteine 96, cysteine 99, cysteine 121, and cysteine 124. Transmembrane regions (helical) follow at residues 147–167 (LALFGPSGAALAAFGLCAALL), 183–203 (LTLPLLWAGLCVNLWGTFASL), 207–227 (VIGAIAGYLFLWCILWLFKLL), 230–250 (IEGIGYGDLKLLAALGAWLGW), 253–273 (LPQVVLIAAVAGAAVGLVATW), and 288–308 (FLAAGGAATLFFGTPFYLLLG).

Belongs to the peptidase A24 family. The cofactor is Zn(2+).

Its subcellular location is the cell inner membrane. It carries out the reaction Typically cleaves a -Gly-|-Phe- bond to release an N-terminal, basic peptide of 5-8 residues from type IV prepilin, and then N-methylates the new N-terminal amino group, the methyl donor being S-adenosyl-L-methionine.. Its function is as follows. Plays an essential role in type IV pili and type II pseudopili formation by proteolytically removing the leader sequence from substrate proteins and subsequently monomethylating the alpha-amino group of the newly exposed N-terminal phenylalanine. The chain is Prepilin leader peptidase/N-methyltransferase (gspO) from Burkholderia pseudomallei (strain 1026b).